Here is a 299-residue protein sequence, read N- to C-terminus: Protein charybde (299 aa).

A disordered region spans residues 73 to 103; that stretch reads LNTRPSATPPSAGGGGPLAGGGSVGMTTPKQ. A compositionally biased stretch (gly residues) spans 84–96; sequence AGGGGPLAGGGSV.

It belongs to the DDIT4 family.

It is found in the cytoplasm. Its function is as follows. Inhibits cell growth by regulating the Tor pathway upstream of the Tsc1-Tsc2 complex and downstream of Akt1. Acts as a cell death activator during head development. This is Protein charybde (chrb) from Drosophila melanogaster (Fruit fly).